Consider the following 358-residue polypeptide: 3-dehydroquinate synthase (358 aa).

NAD(+) is bound by residues 69–74 (DGEAHK), 103–107 (GVIGD), 127–128 (TT), Lys140, Lys149, and 167–170 (CLRT). The Zn(2+) site is built by Glu182, His245, and His262.

This sequence belongs to the sugar phosphate cyclases superfamily. Dehydroquinate synthase family. It depends on Co(2+) as a cofactor. Zn(2+) is required as a cofactor. Requires NAD(+) as cofactor.

The protein localises to the cytoplasm. The enzyme catalyses 7-phospho-2-dehydro-3-deoxy-D-arabino-heptonate = 3-dehydroquinate + phosphate. The protein operates within metabolic intermediate biosynthesis; chorismate biosynthesis; chorismate from D-erythrose 4-phosphate and phosphoenolpyruvate: step 2/7. In terms of biological role, catalyzes the conversion of 3-deoxy-D-arabino-heptulosonate 7-phosphate (DAHP) to dehydroquinate (DHQ). This is 3-dehydroquinate synthase from Tolumonas auensis (strain DSM 9187 / NBRC 110442 / TA 4).